The chain runs to 181 residues: Oligoribonuclease (181 aa).

Residues 8 to 171 form the Exonuclease domain; sequence LIWIDLEMTG…LDIQESIAEL (164 aa). Tyr129 is a catalytic residue.

Belongs to the oligoribonuclease family.

It localises to the cytoplasm. 3'-to-5' exoribonuclease specific for small oligoribonucleotides. The chain is Oligoribonuclease from Shewanella amazonensis (strain ATCC BAA-1098 / SB2B).